The chain runs to 102 residues: Large ribosomal subunit protein eL30 (102 aa).

The protein belongs to the eukaryotic ribosomal protein eL30 family. As to quaternary structure, part of the 50S ribosomal subunit.

This Thermococcus kodakarensis (strain ATCC BAA-918 / JCM 12380 / KOD1) (Pyrococcus kodakaraensis (strain KOD1)) protein is Large ribosomal subunit protein eL30.